Here is an 86-residue protein sequence, read N- to C-terminus: Latartoxin-1b (86 aa).

A signal peptide spans 1-19 (MKILVLAVVCTVLLQVALS). The propeptide at 20–26 (ADSEEVR) is removed in mature form. The Processing quadruplet motif motif lies at 23–26 (EEVR). Disulfide bonds link cysteine 28/cysteine 43, cysteine 35/cysteine 48, cysteine 42/cysteine 65, and cysteine 50/cysteine 63.

The protein belongs to the neurotoxin 19 (CSTX) family. In terms of processing, contains 4 disulfide bonds. Post-translationally, cleavage of the propeptide depends on the processing quadruplet motif (XXXR, with at least one of X being E). Expressed by the venom gland.

It is found in the secreted. Functionally, insect toxin. The sequence is that of Latartoxin-1b from Lachesana tarabaevi (Spider).